The primary structure comprises 558 residues: Potassium-transporting ATPase potassium-binding subunit 2 (558 aa).

12 helical membrane-spanning segments follow: residues 1–21 (MSIVLFLIVFILLSLIVSRYL), 60–80 (IKHFLLFNGLMGGLSFVLLLI), 129–149 (VITFLMFTSAASGYAVCIAML), 169–189 (FIVRVLIPFALIISLFLISQG), 246–266 (WSNYAEALSMMLIPGSLVFLF), 281–301 (IMIFVAMFVMFIGFLVTCLYF), 326–346 (FGIGLSALFTTITTAFTTGTV), 353–373 (LTPLGGMVPMVLMMLNAVFGG), 376–396 (VGLMNMLIYVMLTVFICSLMI), 415–435 (IALSFLVHPLLILVFSALAFI), 485–505 (IVMLLARYIPIVLQILIVSSL), and 523–543 (LFFSSVLIIFIILLSGLTFLP).

Belongs to the KdpA family. The system is composed of three essential subunits: KdpA, KdpB and KdpC.

It is found in the cell membrane. Its function is as follows. Part of the high-affinity ATP-driven potassium transport (or Kdp) system, which catalyzes the hydrolysis of ATP coupled with the electrogenic transport of potassium into the cytoplasm. This subunit binds the extracellular potassium ions and delivers the ions to the membrane domain of KdpB through an intramembrane tunnel. The protein is Potassium-transporting ATPase potassium-binding subunit 2 of Staphylococcus aureus (strain Mu50 / ATCC 700699).